The sequence spans 147 residues: Large ribosomal subunit protein uL13 (147 aa).

This sequence belongs to the universal ribosomal protein uL13 family. As to quaternary structure, part of the 50S ribosomal subunit.

Functionally, this protein is one of the early assembly proteins of the 50S ribosomal subunit, although it is not seen to bind rRNA by itself. It is important during the early stages of 50S assembly. In Rhodococcus erythropolis (strain PR4 / NBRC 100887), this protein is Large ribosomal subunit protein uL13.